The primary structure comprises 663 residues: Protein-arginine deiminase type-1 (663 aa).

The Ca(2+) site is built by asparagine 153, aspartate 155, aspartate 157, aspartate 165, aspartate 176, aspartate 179, glutamine 351, glutamate 353, lysine 364, aspartate 371, serine 372, asparagine 375, phenylalanine 409, and leucine 412. Cysteine 645 acts as the Nucleophile in catalysis.

It belongs to the protein arginine deiminase family. As to quaternary structure, monomer. Ca(2+) serves as cofactor. Detected in epidermal keratinocytes (at protein level). Epidermis, prostate, testis, placenta, spleen and thymus.

It localises to the cytoplasm. The enzyme catalyses L-arginyl-[protein] + H2O = L-citrullyl-[protein] + NH4(+). Catalyzes the deimination of arginine residues of proteins. This Homo sapiens (Human) protein is Protein-arginine deiminase type-1 (PADI1).